A 437-amino-acid polypeptide reads, in one-letter code: tRNA(Ile2) 2-agmatinylcytidine synthetase TiaS (437 aa).

Belongs to the TiaS family.

It localises to the cytoplasm. The catalysed reaction is cytidine(34) in tRNA(Ile2) + agmatine + ATP + H2O = 2-agmatinylcytidine(34) in tRNA(Ile2) + AMP + 2 phosphate + 2 H(+). In terms of biological role, ATP-dependent agmatine transferase that catalyzes the formation of 2-agmatinylcytidine (agm2C) at the wobble position (C34) of tRNA(Ile2), converting the codon specificity from AUG to AUA. The protein is tRNA(Ile2) 2-agmatinylcytidine synthetase TiaS of Acidilobus saccharovorans (strain DSM 16705 / JCM 18335 / VKM B-2471 / 345-15).